Reading from the N-terminus, the 358-residue chain is Polyadenylate-binding protein-interacting protein 11 (358 aa).

The span at 1 to 19 (MAVVETGAAATAADAGGVV) shows a compositional bias: low complexity. The interval 1–45 (MAVVETGAAATAADAGGVVIQPPPSSPPSSMTSQDSGVSSDDQNH) is disordered. The span at 31–41 (MTSQDSGVSSD) shows a compositional bias: polar residues. Residues 92 to 102 (KLNPMAEEFVP) carry the PAM2-like motif. The segment at 136–164 (GGYGNENGGFRRKKSFGQGKRRMNARTSM) is disordered. The span at 145–159 (FRRKKSFGQGKRRMN) shows a compositional bias: basic residues. The Bipartite nuclear localization signal signature appears at 146-157 (RRKKSFGQGKRR). RRM domains are found at residues 173-248 (RTVY…PSKT) and 270-346 (RTIY…PSKT).

In terms of tissue distribution, expressed in cauline leaves, stems, immature siliques and primary inflorescences.

The protein localises to the nucleus. The chain is Polyadenylate-binding protein-interacting protein 11 (CID11) from Arabidopsis thaliana (Mouse-ear cress).